A 545-amino-acid polypeptide reads, in one-letter code: Prolyl 3-hydroxylase OGFOD1 (545 aa).

Residues 1 to 23 (MNGKRPADPGPARPMKKGKKQVS) form a disordered region. Residues 137–239 (PTIDMSCAKY…RLSISGWFYG (103 aa)) enclose the Fe2OG dioxygenase domain. H155 and D157 together coordinate Fe cation. A 2-oxoglutarate-binding site is contributed by Y169. H218 provides a ligand contact to Fe cation. A 2-oxoglutarate-binding site is contributed by R230. Acidic residues predominate over residues 371–380 (SEDDETEEKG). Residues 371 to 437 (SEDDETEEKG…EAKKESSVPM (67 aa)) form a disordered region. Residues 383 to 393 (ETASAAAGTEE) are compositionally biased toward low complexity. Residues 402-417 (PENNQVAAGSHSQENG) are compositionally biased toward polar residues.

It belongs to the TPA1 family. In terms of assembly, monomer. Fe(2+) is required as a cofactor. It depends on L-ascorbate as a cofactor.

It is found in the cytoplasm. Its subcellular location is the nucleus. It catalyses the reaction [ribosomal protein uS12]-L-proline + 2-oxoglutarate + O2 = [ribosomal protein uS12]-(3S)-3-hydroxy-L-proline + succinate + CO2. In terms of biological role, prolyl 3-hydroxylase that catalyzes 3-hydroxylation of 'Pro-62' of small ribosomal subunit uS12 (RPS23), thereby regulating protein translation termination efficiency. Involved in stress granule formation. This is Prolyl 3-hydroxylase OGFOD1 (Ogfod1) from Mus musculus (Mouse).